The primary structure comprises 447 residues: Phosphoglucosamine mutase (447 aa).

The active-site Phosphoserine intermediate is Ser107. Positions 107, 246, 248, and 250 each coordinate Mg(2+). Position 107 is a phosphoserine (Ser107).

This sequence belongs to the phosphohexose mutase family. The cofactor is Mg(2+). In terms of processing, activated by phosphorylation.

The enzyme catalyses alpha-D-glucosamine 1-phosphate = D-glucosamine 6-phosphate. Catalyzes the conversion of glucosamine-6-phosphate to glucosamine-1-phosphate. In Ralstonia pickettii (strain 12J), this protein is Phosphoglucosamine mutase.